The following is a 589-amino-acid chain: O-fucosyltransferase 11 (589 aa).

The interval 1–37 (MKSKIHHQPNGSNNGVVSSNDNGCRSESPSPPLSPNR) is disordered. Residues 10–23 (NGSNNGVVSSNDNG) are compositionally biased toward low complexity. Residues 68–88 (MIYASGLLMCVGPFSGLVGWV) form a helical; Signal-anchor for type II membrane protein membrane-spanning segment. N-linked (GlcNAc...) asparagine glycans are attached at residues Asn112, Asn136, and Asn239. 332-334 (HLR) is a binding site for substrate. Asn405, Asn406, and Asn564 each carry an N-linked (GlcNAc...) asparagine glycan.

This sequence belongs to the glycosyltransferase GT106 family.

It localises to the membrane. Its pathway is glycan metabolism. This is O-fucosyltransferase 11 from Arabidopsis thaliana (Mouse-ear cress).